The primary structure comprises 116 residues: NADH-ubiquinone oxidoreductase chain 3 (116 aa).

The next 3 membrane-spanning stretches (helical) occupy residues 3–23 (LLMT…IVSF), 56–76 (FFLI…LLPL), and 85–105 (PLLT…GLIY).

Belongs to the complex I subunit 3 family.

It is found in the mitochondrion membrane. It carries out the reaction a ubiquinone + NADH + 5 H(+)(in) = a ubiquinol + NAD(+) + 4 H(+)(out). Its function is as follows. Core subunit of the mitochondrial membrane respiratory chain NADH dehydrogenase (Complex I) that is believed to belong to the minimal assembly required for catalysis. Complex I functions in the transfer of electrons from NADH to the respiratory chain. The immediate electron acceptor for the enzyme is believed to be ubiquinone. This is NADH-ubiquinone oxidoreductase chain 3 (MT-ND3) from Paralichthys olivaceus (Bastard halibut).